The sequence spans 904 residues: Envelope glycoprotein B (904 aa).

The N-terminal stretch at 1-22 (MRGGGLICALVVGALVAAVASA) is a signal peptide. The Virion surface portion of the chain corresponds to 23 to 771 (APAAPAAPRA…SGVSSFMSNP (749 aa)). The interval 40-83 (VAANGGPASRPPPVPSPATTKARKRKTKKPPKRPEATPPPDANA) is disordered. Residues 60–70 (KARKRKTKKPP) are compositionally biased toward basic residues. Asparagine 82 and asparagine 136 each carry an N-linked (GlcNAc...) asparagine; by host glycan. Disulfide bonds link cysteine 111–cysteine 570, cysteine 128–cysteine 526, cysteine 202–cysteine 266, cysteine 359–cysteine 407, and cysteine 593–cysteine 630. 2 involved in fusion and/or binding to host membrane regions span residues 168 to 174 (VWFGHRY) and 253 to 260 (RVEAFHRY). Asparagine 393, asparagine 425, and asparagine 486 each carry an N-linked (GlcNAc...) asparagine; by host glycan. Residues 467-490 (QDRKPRNATPAPLREAPSANASVE) are disordered. Asparagine 671 is a glycosylation site (N-linked (GlcNAc...) asparagine; by host). Hydrophobic membrane proximal region stretches follow at residues 716-769 (IDTV…SFMS) and 728-768 (MFAG…SSFM). A helical transmembrane segment spans residues 772–792 (FGALAVGLLVLAGLVAAFFAF). Residues 793–904 (RYVLQLQRNP…EDEAGDEDEL (112 aa)) are Intravirion-facing. The disordered stretch occupies residues 816–835 (TSDPGGVGGEGEEGAEGGGF). Positions 849 to 852 (YMAL) match the Golgi targeting motif. The segment at 883–904 (KRNKARYSPLHNEDEAGDEDEL) is disordered. Residues 889 to 892 (YSPL) carry the Internalization motif motif.

This sequence belongs to the herpesviridae glycoprotein B family. In terms of assembly, homotrimer; disulfide-linked. Binds to heparan sulfate proteoglycans. Interacts with gH/gL heterodimer.

Its subcellular location is the virion membrane. The protein localises to the host cell membrane. It is found in the host endosome membrane. It localises to the host Golgi apparatus membrane. Functionally, envelope glycoprotein that forms spikes at the surface of virion envelope. Essential for the initial attachment to heparan sulfate moieties of the host cell surface proteoglycans. Involved in fusion of viral and cellular membranes leading to virus entry into the host cell. Following initial binding to its host receptors, membrane fusion is mediated by the fusion machinery composed at least of gB and the heterodimer gH/gL. May be involved in the fusion between the virion envelope and the outer nuclear membrane during virion egress. The polypeptide is Envelope glycoprotein B (Homo sapiens (Human)).